Here is a 433-residue protein sequence, read N- to C-terminus: Histidinol dehydrogenase (433 aa).

Substrate-binding residues include serine 236, glutamine 258, and histidine 261. Zn(2+)-binding residues include glutamine 258 and histidine 261. Active-site proton acceptor residues include glutamate 325 and histidine 326. Substrate contacts are provided by histidine 326, aspartate 359, glutamate 413, and histidine 418. Aspartate 359 provides a ligand contact to Zn(2+). Zn(2+) is bound at residue histidine 418.

The protein belongs to the histidinol dehydrogenase family. Zn(2+) serves as cofactor.

The enzyme catalyses L-histidinol + 2 NAD(+) + H2O = L-histidine + 2 NADH + 3 H(+). Its pathway is amino-acid biosynthesis; L-histidine biosynthesis; L-histidine from 5-phospho-alpha-D-ribose 1-diphosphate: step 9/9. Catalyzes the sequential NAD-dependent oxidations of L-histidinol to L-histidinaldehyde and then to L-histidine. The chain is Histidinol dehydrogenase from Pseudoalteromonas translucida (strain TAC 125).